A 180-amino-acid polypeptide reads, in one-letter code: Methionine-R-sulfoxide reductase B2, mitochondrial (180 aa).

The N-terminal 41 residues, 1–41, are a transit peptide targeting the mitochondrion; it reads MSRFLVRLSTVVSKGATGKSVLPQKRIFAGIRLISSSTGLQ. In terms of domain architecture, MsrB spans 49–178; sequence STDWQRKLSP…NSVALNFKPR (130 aa). Zn(2+) is bound by residues Cys88, Cys91, Cys144, and Cys147. The active-site Nucleophile is the Cys167.

It belongs to the MsrB Met sulfoxide reductase family. Requires Zn(2+) as cofactor.

It localises to the mitochondrion. The catalysed reaction is L-methionyl-[protein] + [thioredoxin]-disulfide + H2O = L-methionyl-(R)-S-oxide-[protein] + [thioredoxin]-dithiol. The enzyme catalyses [thioredoxin]-disulfide + L-methionine + H2O = L-methionine (R)-S-oxide + [thioredoxin]-dithiol. Functionally, methionine-sulfoxide reductase that specifically reduces methionine (R)-sulfoxide back to methionine. While in many cases, methionine oxidation is the result of random oxidation following oxidative stress, methionine oxidation is also a post-translational modification that takes place on specific residue. Upon oxidative stress, may play a role in the preservation of mitochondrial integrity by decreasing the intracellular reactive oxygen species build-up through its scavenging role, hence contributing to cell survival and protein maintenance. This Danio rerio (Zebrafish) protein is Methionine-R-sulfoxide reductase B2, mitochondrial (msrb2).